Reading from the N-terminus, the 339-residue chain is NmrA-like family domain-containing oxidoreductase notA (339 aa).

NADP(+) contacts are provided by residues 13–18 (GATGAQ), 39–43 (RKPDS), 60–61 (DG), 81–83 (TNS), lysine 140, and 164–167 (YMGI).

This sequence belongs to the NmrA-type oxidoreductase family.

Its function is as follows. NmrA-like family domain-containing oxidoreductase; part of the gene cluster that mediates the biosynthesis of notoamide, a fungal indole alkaloid that belongs to a family of natural products containing a characteristic bicyclo[2.2.2]diazaoctane core. The first step of notoamide biosynthesis involves coupling of L-proline and L-tryptophan by the bimodular NRPS notE, to produce cyclo-L-tryptophan-L-proline called brevianamide F. The reverse prenyltransferase notF then acts as a deoxybrevianamide E synthase and converts brevianamide F to deoxybrevianamide E via reverse prenylation at C-2 of the indole ring leading to the bicyclo[2.2.2]diazaoctane core. Deoxybrevianamide E is further hydroxylated at C-6 of the indole ring, likely catalyzed by the cytochrome P450 monooxygenase notG, to yield 6-hydroxy-deoxybrevianamide E. 6-hydroxy-deoxybrevianamide E is a specific substrate of the prenyltransferase notC for normal prenylation at C-7 to produce 6-hydroxy-7-prenyl-deoxybrevianamide, also called notoamide S. As the proposed pivotal branching point in notoamide biosynthesis, notoamide S can be diverted to notoamide E through an oxidative pyran ring closure putatively catalyzed by either notH cytochrome P450 monooxygenase or the notD FAD-linked oxidoreductase. This step would be followed by an indole 2,3-epoxidation-initiated pinacol-like rearrangement catalyzed by the notB FAD-dependent monooxygenase leading to the formation of notoamide C and notoamide D. On the other hand notoamide S is converted to notoamide T by notH (or notD), a bifunctional oxidase that also functions as the intramolecular Diels-Alderase responsible for generation of (+)-notoamide T. To generate antipodal (-)-notoaminide T, notH' (or notD') in Aspergillus versicolor is expected to catalyze a Diels-Alder reaction leading to the opposite stereochemistry. The remaining oxidoreductase notD (or notH) likely catalyzes the oxidative pyran ring formation to yield (+)-stephacidin A. The FAD-dependent monooxygenase notI is highly similar to notB and is predicted to catalyze a similar conversion from (+)-stephacidin A to (-)-notoamide B via the 2,3-epoxidation of (+)-stephacidin A followed by a pinacol-type rearrangement. Finally, it remains unclear which enzyme could be responsible for the final hydroxylation steps leading to notoamide A and sclerotiamide. In Aspergillus sp. (strain MF297-2), this protein is NmrA-like family domain-containing oxidoreductase notA.